A 90-amino-acid polypeptide reads, in one-letter code: uncharacterized protein (90 aa).

This is an uncharacterized protein from Rickettsia prowazekii (strain Madrid E).